The chain runs to 171 residues: Peptide deformylase 1 (171 aa).

Positions 99 and 141 each coordinate Fe cation. Residue E142 is part of the active site.

This sequence belongs to the polypeptide deformylase family. Requires Fe(2+) as cofactor.

It catalyses the reaction N-terminal N-formyl-L-methionyl-[peptide] + H2O = N-terminal L-methionyl-[peptide] + formate. Removes the formyl group from the N-terminal Met of newly synthesized proteins. Requires at least a dipeptide for an efficient rate of reaction. N-terminal L-methionine is a prerequisite for activity but the enzyme has broad specificity at other positions. The polypeptide is Peptide deformylase 1 (Xanthomonas axonopodis pv. citri (strain 306)).